A 107-amino-acid polypeptide reads, in one-letter code: RNA polymerase II transcriptional coactivator KIWI (107 aa).

The segment at 1-40 (MSSRGKRKDEDVRASDDESETHAPAKKVAKPADDSDQSDD) is disordered. Residues 7–23 (RKDEDVRASDDESETHA) are compositionally biased toward basic and acidic residues.

Belongs to the transcriptional coactivator PC4 family.

The protein resides in the nucleus. Functionally, general coactivator that functions cooperatively with TAFs and mediates functional interactions between upstream activators and the general transcriptional machinery. Binds single-stranded DNA. This chain is RNA polymerase II transcriptional coactivator KIWI (KIWI), found in Arabidopsis thaliana (Mouse-ear cress).